An 879-amino-acid chain; its full sequence is uncharacterized protein (879 aa).

A helical membrane pass occupies residues 14–34 (LAFFGCGVSVGAFFTLFLMGT).

It is found in the membrane. This is an uncharacterized protein from Mycoplasma pneumoniae (strain ATCC 29342 / M129 / Subtype 1) (Mycoplasmoides pneumoniae).